Here is a 140-residue protein sequence, read N- to C-terminus: ATP synthase epsilon chain (140 aa).

This sequence belongs to the ATPase epsilon chain family. In terms of assembly, F-type ATPases have 2 components, CF(1) - the catalytic core - and CF(0) - the membrane proton channel. CF(1) has five subunits: alpha(3), beta(3), gamma(1), delta(1), epsilon(1). CF(0) has three main subunits: a, b and c.

The protein localises to the cell inner membrane. In terms of biological role, produces ATP from ADP in the presence of a proton gradient across the membrane. This Nitrosococcus oceani (strain ATCC 19707 / BCRC 17464 / JCM 30415 / NCIMB 11848 / C-107) protein is ATP synthase epsilon chain.